Reading from the N-terminus, the 512-residue chain is Opioid growth factor receptor-like protein 1 (512 aa).

3 disordered regions span residues 1-72, 323-469, and 488-512; these read MGNI…ETGT, IWGP…TCCK, and SLSP…GPFT. Acidic residues-rich tracts occupy residues 28–54 and 62–71; these read GGEE…DNEE and TNEGGEEETG. Residues 328-337 are compositionally biased toward basic and acidic residues; it reads DKQKADENKA. Positions 347 to 361 are enriched in basic residues; it reads QKKHSHVEKKSRPAK. Positions 408-421 are enriched in polar residues; the sequence is TVTSENNSSKTGQT. A compositionally biased stretch (basic and acidic residues) spans 449–468; sequence RSLDTEHDLKRPEADRETCC. Over residues 490-499 the composition is skewed to polar residues; the sequence is SPGTSNSNVT.

The protein belongs to the opioid growth factor receptor family.

This Xenopus tropicalis (Western clawed frog) protein is Opioid growth factor receptor-like protein 1 (ogfrl1).